The following is a 291-amino-acid chain: Gamma-sarcoglycan (291 aa).

The helical; Signal-anchor for type II membrane protein transmembrane segment at 38-58 threads the bilayer; sequence LFVLLLLIVLLVNFALTIWIL. The Extracellular portion of the chain corresponds to 59–291; that stretch reads RVMWFSPVGM…TCHEHSHLCL (233 aa). N-linked (GlcNAc...) asparagine glycosylation occurs at N110. Disulfide bonds link C265/C290 and C267/C283.

It belongs to the sarcoglycan beta/delta/gamma/zeta family. Interacts with the syntrophin SNTA1. Cross-link to form 2 major subcomplexes: one consisting of SGCB, SGCD and SGCG and the other consisting of SGCB and SGCD. The association between SGCB and SGCG is particularly strong while SGCA is loosely associated with the other sarcoglycans. Interacts with FLNC. Post-translationally, disulfide bonds are present.

Its subcellular location is the cell membrane. It is found in the sarcolemma. The protein resides in the cytoplasm. The protein localises to the cytoskeleton. In terms of biological role, component of the sarcoglycan complex, a subcomplex of the dystrophin-glycoprotein complex which forms a link between the F-actin cytoskeleton and the extracellular matrix. This chain is Gamma-sarcoglycan (SGCG), found in Bos taurus (Bovine).